Here is a 363-residue protein sequence, read N- to C-terminus: MDQIVNVDEFQELAKQALPKMYYDFYNGGAEDQHTLNENVQAFRRIMFRPRVLVDVSNIDMSTSMLGYPISAPIMIAPTAMHKLAHPKGEIATAKAAAACNTIMIVSFMSTCTIEEVASSCNAVRFLQIYVYKRRDVTAQIVKRAEKAGFKAIVLTVDVPRLGRREADIKNKMISPQLKNFEGLVSTEVRPNEGSGVEAFASSAFDASLSWKDIEWLRSITKLPILVKGLLTREDALKAVEAGVDGIVVSNHGARQLDYSPATITVLEEVVHAVKGRIPVLLDGGVRRGTDVFKALALGAQAVLIGRPIVYGLAAKGEDGVKKVIDMLKNEFEITMALSGCPTIDDVTRNHVRTENERIKSML.

Residues 1–357 (MDQIVNVDEF…TRNHVRTENE (357 aa)) form the FMN hydroxy acid dehydrogenase domain. FMN-binding positions include 78–80 (PTA), S107, 128–130 (QIY), and T156. Residue Y130 participates in a 2-oxocarboxylate binding. R165 contributes to the a 2-oxocarboxylate binding site. FMN is bound by residues K228 and S250. The active-site Proton acceptor is H252. R255 is an a 2-oxocarboxylate binding site. FMN-binding positions include 283-287 (DGGVR) and 306-307 (GR). A Microbody targeting signal motif is present at residues 361 to 363 (SML).

The protein belongs to the FMN-dependent alpha-hydroxy acid dehydrogenase family. As to quaternary structure, homotetramer. It depends on FMN as a cofactor.

It localises to the peroxisome. It catalyses the reaction a (2S)-2-hydroxycarboxylate + O2 = a 2-oxocarboxylate + H2O2. It carries out the reaction 2-hydroxydodecanoate + O2 = 2-oxododecanoate + H2O2. The enzyme catalyses 2-hydroxyhexanoate + O2 = 2-oxohexanoate + H2O2. The catalysed reaction is 2-hydroxyoctanoate + O2 = 2-oxooctanoate + H2O2. It catalyses the reaction (S)-lactate + O2 = pyruvate + H2O2. Its pathway is lipid metabolism; fatty acid metabolism. Its function is as follows. Oxidase that catalyzes the oxidation of a broad range of 2-hydroxyacids to the corresponding 2-oxoacids, with a reduction of O2 to H2O2. Displays the highest activity with the long-chain fatty acid 2-hydroxydodecanoate and has intermediate activity with 2-hydroxyhexanoate, 2-hydroxyoctanote, and the short-chain hydroxyacid (S)-lactate (L-lactate). With much lower activity, it can also use glycolate, leucic acid, valic acid, and isoleucic acid as substrates in vitro. Cannot use 2-hydroxyhexadecanoate or D-lactate as substrates. May be involved in a general medium- and long-chain fatty acid catabolic pathway such as alpha-oxidation. The protein is Peroxisomal (S)-2-hydroxyacid oxidase GLO4 (GLO4) of Arabidopsis thaliana (Mouse-ear cress).